The chain runs to 591 residues: Probable LRR receptor-like serine/threonine-protein kinase At1g69990 (591 aa).

Positions 1-18 (MKTISIFFVIILMSSSHA) are cleaved as a signal peptide. Topologically, residues 19–218 (EDDVLCLKGF…GKNLTIIVTA (200 aa)) are extracellular. N-linked (GlcNAc...) asparagine glycosylation occurs at N46. LRR repeat units follow at residues 66–88 (RILS…LKLC), 90–111 (SLQS…QICS), 115–137 (YLVT…IVDC), 139–162 (FLNS…TRLN), and 163–185 (RLQR…LSHY). N211 carries N-linked (GlcNAc...) asparagine glycosylation. Residues 219–239 (GVIGAVGSLCVGFGMFWWFFI) traverse the membrane as a helical segment. Over 240–591 (RDRRKMNNYG…LIFNKQEHLK (352 aa)) the chain is Cytoplasmic. Position 292 is a phosphothreonine (T292). In terms of domain architecture, Protein kinase spans 295–573 (FDSGNIVVSS…KNLGDQHGFF (279 aa)). ATP contacts are provided by residues 301-309 (VVSSRSGVS) and K323. At S378 the chain carries Phosphoserine. A Phosphothreonine modification is found at T389. Y463 bears the Phosphotyrosine mark. S465 carries the post-translational modification Phosphoserine. T466 carries the phosphothreonine modification. S470 carries the phosphoserine modification.

It belongs to the protein kinase superfamily. Ser/Thr protein kinase family.

Its subcellular location is the membrane. It catalyses the reaction L-seryl-[protein] + ATP = O-phospho-L-seryl-[protein] + ADP + H(+). The catalysed reaction is L-threonyl-[protein] + ATP = O-phospho-L-threonyl-[protein] + ADP + H(+). The chain is Probable LRR receptor-like serine/threonine-protein kinase At1g69990 from Arabidopsis thaliana (Mouse-ear cress).